We begin with the raw amino-acid sequence, 386 residues long: Oxytocin receptor (386 aa).

Positions M1–P31 are disordered. Over M1–L38 the chain is Extracellular. Residues N8, N15, and N26 are each glycosylated (N-linked (GlcNAc...) asparagine). The helical transmembrane segment at A39–A63 threads the bilayer. Topologically, residues L64–L74 are cytoplasmic. The chain crosses the membrane as a helical span at residues F75–L97. Residues L98–R113 lie on the Extracellular side of the membrane. An intrachain disulfide couples C112 to C187. Residues L114 to L135 form a helical membrane-spanning segment. The Cytoplasmic segment spans residues D136–R154. Residues L155–F175 traverse the membrane as a helical segment. At S176–T202 the chain is on the extracellular side. A helical membrane pass occupies residues W203–F225. The Cytoplasmic segment spans residues K226–K277. The helical transmembrane segment at M278–V296 threads the bilayer. Topologically, residues Q297–S311 are extracellular. A helical transmembrane segment spans residues A312–F334. At T335 to S386 the chain is on the cytoplasmic side. A compositionally biased stretch (polar residues) spans K355–L375. The segment at K355 to S386 is disordered. S368 and S370 each carry phosphoserine. Residues S376–S386 are compositionally biased toward low complexity.

This sequence belongs to the G-protein coupled receptor 1 family. Vasopressin/oxytocin receptor subfamily.

It is found in the cell membrane. Receptor for oxytocin. The activity of this receptor is mediated by G proteins which activate a phosphatidylinositol-calcium second messenger system. This is Oxytocin receptor (OXTR) from Sus scrofa (Pig).